We begin with the raw amino-acid sequence, 399 residues long: DNA primase DnaG (399 aa).

The Toprim domain maps to 182–268 (DAIIVVEGRA…EVEDLTQKEI (87 aa)). Mg(2+) contacts are provided by E188, D230, and D232.

It belongs to the archaeal DnaG primase family. Forms a ternary complex with MCM helicase and DNA. Component of the archaeal exosome complex. It depends on Mg(2+) as a cofactor.

It catalyses the reaction ssDNA + n NTP = ssDNA/pppN(pN)n-1 hybrid + (n-1) diphosphate.. Functionally, RNA polymerase that catalyzes the synthesis of short RNA molecules used as primers for DNA polymerase during DNA replication. Also part of the exosome, which is a complex involved in RNA degradation. Acts as a poly(A)-binding protein that enhances the interaction between heteromeric, adenine-rich transcripts and the exosome. This is DNA primase DnaG from Archaeoglobus fulgidus (strain ATCC 49558 / DSM 4304 / JCM 9628 / NBRC 100126 / VC-16).